A 518-amino-acid chain; its full sequence is Glutamate--cysteine ligase (518 aa).

The protein belongs to the glutamate--cysteine ligase type 1 family. Type 1 subfamily.

The catalysed reaction is L-cysteine + L-glutamate + ATP = gamma-L-glutamyl-L-cysteine + ADP + phosphate + H(+). It participates in sulfur metabolism; glutathione biosynthesis; glutathione from L-cysteine and L-glutamate: step 1/2. The sequence is that of Glutamate--cysteine ligase from Klebsiella pneumoniae subsp. pneumoniae (strain ATCC 700721 / MGH 78578).